We begin with the raw amino-acid sequence, 427 residues long: Glutamate-1-semialdehyde 2,1-aminomutase (427 aa).

Lysine 267 is subject to N6-(pyridoxal phosphate)lysine.

It belongs to the class-III pyridoxal-phosphate-dependent aminotransferase family. HemL subfamily. As to quaternary structure, homodimer. It depends on pyridoxal 5'-phosphate as a cofactor.

Its subcellular location is the cytoplasm. It carries out the reaction (S)-4-amino-5-oxopentanoate = 5-aminolevulinate. Its pathway is porphyrin-containing compound metabolism; protoporphyrin-IX biosynthesis; 5-aminolevulinate from L-glutamyl-tRNA(Glu): step 2/2. The polypeptide is Glutamate-1-semialdehyde 2,1-aminomutase (Geobacter sulfurreducens (strain ATCC 51573 / DSM 12127 / PCA)).